The following is a 455-amino-acid chain: tRNA modification GTPase MnmE (455 aa).

The (6S)-5-formyl-5,6,7,8-tetrahydrofolate site is built by R24, E86, and R125. The TrmE-type G domain maps to G220 to Q376. A K(+)-binding site is contributed by N230. Residues N230 to S235, T249 to T255, and D274 to G277 each bind GTP. S234 is a binding site for Mg(2+). K(+) is bound by residues T249, L251, and T254. T255 contacts Mg(2+). K455 contributes to the (6S)-5-formyl-5,6,7,8-tetrahydrofolate binding site.

This sequence belongs to the TRAFAC class TrmE-Era-EngA-EngB-Septin-like GTPase superfamily. TrmE GTPase family. Homodimer. Heterotetramer of two MnmE and two MnmG subunits. K(+) is required as a cofactor.

Its subcellular location is the cytoplasm. In terms of biological role, exhibits a very high intrinsic GTPase hydrolysis rate. Involved in the addition of a carboxymethylaminomethyl (cmnm) group at the wobble position (U34) of certain tRNAs, forming tRNA-cmnm(5)s(2)U34. This Acaryochloris marina (strain MBIC 11017) protein is tRNA modification GTPase MnmE.